The sequence spans 427 residues: Dihydroorotase (427 aa).

Positions 58 and 60 each coordinate Zn(2+). Substrate contacts are provided by residues H60–R62 and N92. Residues D150, H177, and H230 each coordinate Zn(2+). Residue N276 coordinates substrate. D303 is a binding site for Zn(2+). Residue D303 is part of the active site. Substrate is bound by residues H307 and F321–G322.

The protein belongs to the metallo-dependent hydrolases superfamily. DHOase family. Class I DHOase subfamily. Requires Zn(2+) as cofactor.

It carries out the reaction (S)-dihydroorotate + H2O = N-carbamoyl-L-aspartate + H(+). It functions in the pathway pyrimidine metabolism; UMP biosynthesis via de novo pathway; (S)-dihydroorotate from bicarbonate: step 3/3. Catalyzes the reversible cyclization of carbamoyl aspartate to dihydroorotate. This Lactobacillus leichmannii protein is Dihydroorotase.